The following is a 389-amino-acid chain: Chalcone synthase 1 (389 aa).

Cys164 is an active-site residue.

Belongs to the thiolase-like superfamily. Chalcone/stilbene synthases family.

The enzyme catalyses (E)-4-coumaroyl-CoA + 3 malonyl-CoA + 3 H(+) = 2',4,4',6'-tetrahydroxychalcone + 3 CO2 + 4 CoA. It functions in the pathway secondary metabolite biosynthesis; flavonoid biosynthesis. In terms of biological role, the primary product of this enzyme is 4,2',4',6'-tetrahydroxychalcone (also termed naringenin-chalcone or chalcone) which can under specific conditions spontaneously isomerize into naringenin. The chain is Chalcone synthase 1 (CHS1) from Camellia sinensis (Tea plant).